The chain runs to 407 residues: Tryptophan synthase beta chain (407 aa).

Residues 1–11 (MSTAPSQQHAS) show a composition bias toward polar residues. Residues 1–25 (MSTAPSQQHASAQVPDPRGRFGDFG) form a disordered region. K100 carries the N6-(pyridoxal phosphate)lysine modification.

This sequence belongs to the TrpB family. As to quaternary structure, tetramer of two alpha and two beta chains. It depends on pyridoxal 5'-phosphate as a cofactor.

It catalyses the reaction (1S,2R)-1-C-(indol-3-yl)glycerol 3-phosphate + L-serine = D-glyceraldehyde 3-phosphate + L-tryptophan + H2O. It functions in the pathway amino-acid biosynthesis; L-tryptophan biosynthesis; L-tryptophan from chorismate: step 5/5. Its function is as follows. The beta subunit is responsible for the synthesis of L-tryptophan from indole and L-serine. The polypeptide is Tryptophan synthase beta chain (Rhodopirellula baltica (strain DSM 10527 / NCIMB 13988 / SH1)).